The chain runs to 248 residues: tRNA pseudouridine synthase A (248 aa).

The active-site Nucleophile is the Asp-53. Residue Tyr-111 coordinates substrate.

Belongs to the tRNA pseudouridine synthase TruA family. As to quaternary structure, homodimer.

The enzyme catalyses uridine(38/39/40) in tRNA = pseudouridine(38/39/40) in tRNA. In terms of biological role, formation of pseudouridine at positions 38, 39 and 40 in the anticodon stem and loop of transfer RNAs. In Listeria monocytogenes serotype 4b (strain CLIP80459), this protein is tRNA pseudouridine synthase A.